Reading from the N-terminus, the 161-residue chain is Nucleotide-binding protein Mmc1_1670 (161 aa).

The protein belongs to the YajQ family.

Nucleotide-binding protein. The chain is Nucleotide-binding protein Mmc1_1670 from Magnetococcus marinus (strain ATCC BAA-1437 / JCM 17883 / MC-1).